The primary structure comprises 126 residues: 3-isopropylmalate dehydrogenase (126 aa).

Mg(2+)-binding residues include Asp-14 and Asp-18. Position 48–60 (48–60 (GSAPDIAGKNIAN)) interacts with NAD(+).

Belongs to the isocitrate and isopropylmalate dehydrogenases family. LeuB type 1 subfamily. As to quaternary structure, homodimer. Mg(2+) serves as cofactor. Requires Mn(2+) as cofactor.

It is found in the cytoplasm. It catalyses the reaction (2R,3S)-3-isopropylmalate + NAD(+) = 4-methyl-2-oxopentanoate + CO2 + NADH. It functions in the pathway amino-acid biosynthesis; L-leucine biosynthesis; L-leucine from 3-methyl-2-oxobutanoate: step 3/4. Catalyzes the oxidation of 3-carboxy-2-hydroxy-4-methylpentanoate (3-isopropylmalate) to 3-carboxy-4-methyl-2-oxopentanoate. The product decarboxylates to 4-methyl-2 oxopentanoate. This Buchnera aphidicola subsp. Uroleucon rurale protein is 3-isopropylmalate dehydrogenase (leuB).